Consider the following 793-residue polypeptide: Plakophilin-3 (793 aa).

The segment at 56–82 is disordered; the sequence is QLGQQPRHNGPAEPDGAAEAARGASRA. The span at 66–82 shows a compositional bias: low complexity; sequence PAEPDGAAEAARGASRA. The residue at position 81 (Arg-81) is an Omega-N-methylarginine. 3 positions are modified to phosphoserine: Ser-122, Ser-179, and Ser-182. Tyr-194 is subject to Phosphotyrosine. Positions 221–240 are disordered; the sequence is SSSRAGGLDWPEATEGPPSR. Ser-239 carries the phosphoserine modification. Thr-249 bears the Phosphothreonine mark. Position 260 is an omega-N-methylarginine (Arg-260). Phosphoserine is present on residues Ser-282, Ser-310, Ser-311, and Ser-328. A required for interaction with SFN region spans residues 282 to 285; the sequence is SLSL. The tract at residues 291–720 is required for interaction with GSK3B; it reads LPDMRGLDSY…ADVLINIIAV (430 aa). 8 ARM repeats span residues 302 to 345, 348 to 387, 390 to 429, 446 to 484, 488 to 533, 592 to 633, 641 to 680, and 685 to 726; these read GHRT…HKCY, AAAK…NLVY, ADNK…NLSS, TDLV…NLSS, ATRQ…NLSY, PKGL…NITA, VLSR…NLSR, and KDEM…NLVV. Residues 513–793 are required for binding to PKP2 mRNA; it reads VGKCEDKSVE…GYRKEDFLGP (281 aa).

It belongs to the beta-catenin family. As to quaternary structure, found in a complex composed of CDH1, RAP1A and PKP3; PKP3 acts as a scaffold protein within the complex, the complex is required for CDH1 localization to mature desmosome cell junctions. Interacts with FXR1; the interaction facilitates the binding of PKP3 to PKP2 mRNA. Interacts (via ARM repeats) with GSK3B; the interaction may be involved in PKP3 protein degradation. Interacts with hyperphosphorylated and hypophosphorylated RB1; the interaction inhibits RB1 interaction with and repression of the transcription factor E2F1, potentially via sequestering RB1 to the cytoplasm. Interacts with CDKN1A; the interaction sequesters CDKN1A to the cytoplasm thereby repressing its role as an inhibitor of CDK4- and CDK6-driven RB1 phosphorylation. Interacts (via N-terminus) with SFN; the interaction maintains the cytoplasmic pool of PKP3, facilitates PKP3 exchange at desmosomes and restricts PKP3 localization to existing desmosome cell junctions. Interacts (via N-terminus) with SFN; the interaction maintains the cytoplasmic pool of PKP3 and restricts PKP3 localization to existing desmosome cell junctions. Interacts (via N-terminus) with JUP; the interaction is required for PKP3 localization to desmosome cell-cell junctions. In terms of processing, phosphorylated at Ser-282 when localized to the cytoplasm, PKP3 at desmosome cell junctions is not phosphorylated. Phosphorylation at Try-194 by SRC is induced by reactive oxygen species and potentially acts as a release mechanism from desmosome cell-cell junctions.

Its subcellular location is the nucleus. The protein resides in the cell junction. It localises to the desmosome. The protein localises to the cytoplasm. It is found in the cell membrane. Its subcellular location is the adherens junction. In terms of biological role, a component of desmosome cell-cell junctions which are required for positive regulation of cellular adhesion. Required for the localization of DSG2, DSP and PKP2 to mature desmosome junctions. May also play a role in the maintenance of DSG3 protein abundance in keratinocytes. Required for the formation of DSP-containing desmosome precursors in the cytoplasm during desmosome assembly. Also regulates the accumulation of CDH1 to mature desmosome junctions, via cAMP-dependent signaling and its interaction with activated RAP1A. Positively regulates the stabilization of PKP2 mRNA and therefore protein abundance, via its interaction with FXR1, may also regulate the protein abundance of DSP via the same mechanism. May also regulate the protein abundance of the desmosome component PKP1. Required for the organization of desmosome junctions at intercellular borders between basal keratinocytes of the epidermis, as a result plays a role in maintenance of the dermal barrier and regulation of the dermal inflammatory response. Required during epidermal keratinocyte differentiation for cell adherence at tricellular cell-cell contacts, via regulation of the timely formation of adherens junctions and desmosomes in a calcium-dependent manner, and may also play a role in the organization of the intracellular actin fiber belt. Acts as a negative regulator of the inflammatory response in hematopoietic cells of the skin and intestine, via modulation of proinflammatory cytokine production. Important for epithelial barrier maintenance in the intestine to reduce intestinal permeability, thereby plays a role in protection from intestinal-derived endotoxemia. Required for the development of hair follicles, via a role in the regulation of inner root sheaf length, correct alignment and anterior-posterior polarity of hair follicles. Promotes proliferation and cell-cycle G1/S phase transition of keratinocytes. Promotes E2F1-driven transcription of G1/S phase promoting genes by acting to release E2F1 from its inhibitory interaction with RB1, via sequestering RB1 and CDKN1A to the cytoplasm and thereby increasing CDK4- and CDK6-driven phosphorylation of RB1. May act as a scaffold protein to facilitate MAPK phosphorylation of RPS6KA protein family members and subsequently promote downstream EGFR signaling. May play a role in the positive regulation of transcription of Wnt-mediated TCF-responsive target genes. The sequence is that of Plakophilin-3 (PKP3) from Bos taurus (Bovine).